The sequence spans 56 residues: Conotoxin Cal6.41b (56 aa).

Residues 1-23 form the signal peptide; sequence MSGSGAMLLGLLILVAMATSLDT. Cystine bridges form between C27–C41, C33–C50, and C40–C54.

In terms of tissue distribution, expressed by the venom duct.

It localises to the secreted. Probable neurotoxin. In Californiconus californicus (California cone), this protein is Conotoxin Cal6.41b.